Here is a 339-residue protein sequence, read N- to C-terminus: GTP 3',8-cyclase (339 aa).

The Radical SAM core domain occupies 13–249; sequence RYGRPLRDLR…GEVAQRHAFA (237 aa). A GTP-binding site is contributed by arginine 22. The [4Fe-4S] cluster site is built by cysteine 29 and cysteine 33. S-adenosyl-L-methionine is bound at residue tyrosine 35. Cysteine 36 contributes to the [4Fe-4S] cluster binding site. Arginine 75 provides a ligand contact to GTP. Glycine 79 lines the S-adenosyl-L-methionine pocket. Threonine 106 is a binding site for GTP. S-adenosyl-L-methionine is bound at residue serine 130. Residue lysine 168 participates in GTP binding. Residue methionine 202 participates in S-adenosyl-L-methionine binding. Residues cysteine 266 and cysteine 269 each contribute to the [4Fe-4S] cluster site. 271-273 contacts GTP; the sequence is RAR. Cysteine 283 lines the [4Fe-4S] cluster pocket.

Belongs to the radical SAM superfamily. MoaA family. In terms of assembly, monomer and homodimer. It depends on [4Fe-4S] cluster as a cofactor.

The enzyme catalyses GTP + AH2 + S-adenosyl-L-methionine = (8S)-3',8-cyclo-7,8-dihydroguanosine 5'-triphosphate + 5'-deoxyadenosine + L-methionine + A + H(+). It participates in cofactor biosynthesis; molybdopterin biosynthesis. Functionally, catalyzes the cyclization of GTP to (8S)-3',8-cyclo-7,8-dihydroguanosine 5'-triphosphate. This Xanthomonas campestris pv. campestris (strain 8004) protein is GTP 3',8-cyclase.